The following is a 424-amino-acid chain: CinA-like protein (424 aa).

The protein belongs to the CinA family.

The polypeptide is CinA-like protein (Shewanella frigidimarina (strain NCIMB 400)).